We begin with the raw amino-acid sequence, 507 residues long: MEILVPGQATLAQLEAIWREGRRARLAPEARPAVEAAAARVAEAAAGTAPVYGVNTGFGKLASLKIAPADTAQLQRNLILSHCCGVGEPMPPSTARLMIALKLLSLGRGASGVRWEIVALLEGMLAAGVTPVIPAQGSVGASGDLAPLAHMAAVMIGEGEAEVGGRRLPGAAALAEAGLAPVALGPKEGLALINGTQFSTAYALAGLFEGWRAAQAALVISALSTDAIMGSTAPLRPEIHALRGHAGQIEAAATMRALLEGSAIRESHREGDQRVQDPYCIRCQPQVTGAAMDVLRMAAGTLATEANAATDNPLVLSDGRIVSGGNFHAEPVGFAADMIALALSEIGAIAQRRVALMVDPTLSFDLPPFLTPEPGLNSGLMIAEVTTAALMSENKHMAAPTVTDSTPTSANQEDHVSMAAHGARRLGRMVENLAVILGTEAICAAQGVEFRAPLATSAPLGAVLARLRAEVPRIAADRILAPDLAAAARLVRTGALARAAGLPFPAL.

The segment at residues 141 to 143 is a cross-link (5-imidazolinone (Ala-Gly)); it reads ASG. 2,3-didehydroalanine (Ser) is present on Ser142.

Belongs to the PAL/histidase family. In terms of processing, contains an active site 4-methylidene-imidazol-5-one (MIO), which is formed autocatalytically by cyclization and dehydration of residues Ala-Ser-Gly.

It localises to the cytoplasm. The catalysed reaction is L-histidine = trans-urocanate + NH4(+). The protein operates within amino-acid degradation; L-histidine degradation into L-glutamate; N-formimidoyl-L-glutamate from L-histidine: step 1/3. In Cereibacter sphaeroides (strain ATCC 17023 / DSM 158 / JCM 6121 / CCUG 31486 / LMG 2827 / NBRC 12203 / NCIMB 8253 / ATH 2.4.1.) (Rhodobacter sphaeroides), this protein is Histidine ammonia-lyase.